The following is a 97-amino-acid chain: ESAT-6-like protein EsxA (97 aa).

It belongs to the WXG100 family. ESAT-6 subfamily. In terms of assembly, forms a tight 1:1 complex with EsxB. Forms a complex with EccC and EsxB, probably wholly mediated by EsxB.

It localises to the secreted. Its function is as follows. May help regulate assembly and function of the type VII secretion system (T7SS). EsxA disassembles pre-formed EccC-EsxB multimers, possibly by making EccC-EsxA-EsxB trimers instead of EccC-EsxB-EsxB-EccC tetramers. The polypeptide is ESAT-6-like protein EsxA (Thermomonospora curvata (strain ATCC 19995 / DSM 43183 / JCM 3096 / KCTC 9072 / NBRC 15933 / NCIMB 10081 / Henssen B9)).